Here is a 217-residue protein sequence, read N- to C-terminus: MTAEHDTDTPEPRLNSTEIRILGCLIEKQATNPETYPLTLNALVLACNQKTSREPVMNLSQGQVGQSLRVLEGQGFTRLVMGSRADRWEHRVDKALELVPAQVILTGLLFLRGPQTVNELLTRSGRMHDFEDAEQVVHQLERLIARGLALLVPRQAGQREDRYTHALGDPADIEVIIAARGSPVERGAGSGVSVERIEELEARIALLEERLAKLEPL.

This sequence belongs to the UPF0502 family.

This Pseudomonas fluorescens (strain SBW25) protein is UPF0502 protein PFLU_2135.